An 89-amino-acid chain; its full sequence is MATKKAGGSSKNGRDSAGRRLGLKKTDGQLVNAGNIIVKQRGTKFYPGKNVGLGKDHTIFSLVSGKVKFFRKKKNRVFISVVVDDSTAA.

Residues 1 to 26 form a disordered region; it reads MATKKAGGSSKNGRDSAGRRLGLKKT.

It belongs to the bacterial ribosomal protein bL27 family.

This is Large ribosomal subunit protein bL27 from Orientia tsutsugamushi (strain Boryong) (Rickettsia tsutsugamushi).